The chain runs to 1087 residues: MGYLQSQKAVSLGDENTDALFKLHTSNRKSANMFGIKSELLNPSELSAVGSYSNDICPNRQSSSSTAADTSPSTNASNTNISFPEQEHKDELFMNVEPKGVGSSMDNHAITIHHSTGNGLLRSSFDHDYRQKNSPRNSIHRLSNISIGNNPIDFESSQQNNPSSLNTSSHHRTSSISNSKSFGTSLSYYNRSSKPSDWNQQNNGGHLSGVISITQDVSSVPLQSSVFSSGNHAYHASMAPKRSGSWRHTNFHSTSHPRAASIGNKSGIPPVPTIPPNIGHSTDHQHPKANISGSLTKSSSESKNLSTIQSPLKTSNSFFKELSPHSQITLSNVKNNHSHVGSQTKSHSFATPSVFDNNKPVSSDNHNNTTTSSQVHPDSRNPDPKAAPKAVSQKTNVDGHRNHEAKHGNTVQNESKSQKSSNKEGRSSRGGFFSRLSFSRSSSRMKKGSKAKHEDAPDVPAIPHAYIADSSTKSSYRNGKKTPTRTKSRMQQFINWFKPSKERSSNGNSDSASPPPVPRLSITRSQVSREPEKPEEIPSVPPLPSNFKDKGHVPQQRSVSYTPKRSSDTSESLQPSLSFASSNVLSEPFDRKVADLAMKAINSKRINKLLDDAKVMQSLLDRACIITPVRNTEVQLINTAPLTEYEQDEINNYDNIYFTGLRNVDKRRSADENTSSNFGFDDERGDYKVVLGDHIAYRYEVVDFLGKGSFGQVLRCIDYETGKLVALKIIRNKKRFHMQALVETKILQKIREWDPLDEYCMVQYTDHFYFRDHLCVATELLGKNLYELIKSNGFKGLPIVVIKSITRQLIQCLTLLNEKHVIHCDLKPENILLCHPFKSQVKVIDFGSSCFEGECVYTYIQSRFYRSPEVILGMGYGTPIDVWSLGCIIAEMYTGFPLFPGENEQEQLACIMEIFGPPDHSLIDKCSRKKVFFDSSGKPRPFVSSKGVSRRPFSKSLHQVLQCKDVSFLSFISDCLKWDPDERMTPQQAAQHDFLTGKQDVRRPNTAPARQKFARPPNIETAPIPRPLPNLPMEYNDHTLPSPKEPSNQASNLVRSSDKFPNLLTNLDYSIISDNGFLRKPVEKSRP.

Disordered regions lie at residues Cys-57–Ile-81, Leu-120–Phe-182, Met-238–Ile-308, and Asn-336–Ser-578. Residues Ser-62–Ile-81 show a composition bias toward low complexity. Polar residues-rich tracts occupy residues Lys-132–Leu-165 and Trp-246–His-256. Positions Ser-292–Thr-307 are enriched in low complexity. Residues Asn-336–Val-361 show a composition bias toward polar residues. Over residues Ser-362–Ser-373 the composition is skewed to low complexity. Residues Val-397–His-407 show a composition bias toward basic and acidic residues. A compositionally biased stretch (low complexity) spans Arg-429–Ser-442. Over residues Asn-478–Ser-488 the composition is skewed to basic residues. The residue at position 513 (Ser-513) is a Phosphoserine. A compositionally biased stretch (basic and acidic residues) spans Val-527–Glu-536. Residues Gln-555–Ser-578 show a composition bias toward polar residues. Residues Tyr-699–Leu-995 enclose the Protein kinase domain. ATP contacts are provided by residues Leu-705–Val-713 and Lys-728. Asp-825 acts as the Proton acceptor in catalysis. 2 disordered regions span residues His-992–Gln-1011 and Pro-1017–Ser-1056. Residues Glu-1045 to Arg-1055 show a composition bias toward polar residues.

The protein belongs to the protein kinase superfamily. CMGC Ser/Thr protein kinase family. MNB/DYRK subfamily. In terms of assembly, interacts with rga4. Interacts with tea4; this interaction triggers pom1 plasma membrane association. Post-translationally, autophosphorylates at the cell cortex to lower lipid affinity and promote membrane release. Dephosphorylation by dis2, regulated by tea4, triggers membrane association.

Its subcellular location is the cell tip. The protein resides in the cell membrane. The enzyme catalyses L-seryl-[protein] + ATP = O-phospho-L-seryl-[protein] + ADP + H(+). It catalyses the reaction L-threonyl-[protein] + ATP = O-phospho-L-threonyl-[protein] + ADP + H(+). The catalysed reaction is L-tyrosyl-[protein] + ATP = O-phospho-L-tyrosyl-[protein] + ADP + H(+). In terms of biological role, polarity factor involved in localization of polarized growth and cytokinesis. Forms an intracellular gradient that serves to measure cell length and control mitotic entry. Controls the timing of mitotic commitment by regulating the inhibitory impact of cdr1/cdr2 on wee1 activity. Directly phosphorylates the tail of cdr2 which inhibits cdr2 activation by ssp1. Cdr2 phosphorylation by pom1 also modulates cdr2 association with membranes and inhibits cdr2 interaction with mid1, reducing its clustering ability, possibly via the down-regulation of cdr2 kinase activity. Acts as a negative regulator of mid1 distribution, excluding mid1 from non-growing ends, which prevents division-septum assembly at the cell ends. The pom1 polar gradient also mediates mitotic entry by regulating cdk1. Plays an essential role in proper localization and phosphorylation of a GAP for cdc42, rga4, which ensures bipolar localization of GTP-bound, active cdc42 involved in F-actin formation. Phosphorylates multiple other substrates that function in polarized cell growth, including tea4, mod5, pal1, the Rho GAP rga7, and the Arf GEF syt22. The protein is DYRK-family kinase pom1 of Schizosaccharomyces pombe (strain 972 / ATCC 24843) (Fission yeast).